A 188-amino-acid chain; its full sequence is Holliday junction branch migration complex subunit RuvA (188 aa).

A domain I region spans residues 1–62; the sequence is MIVGVRGVLV…EDAQLLYGFL (62 aa). The segment at 63-135 is domain II; that stretch reads ELGEKKLFER…LSGFDTELII (73 aa). The tract at residues 135 to 139 is flexible linker; that stretch reads ISASE. Residues 140 to 188 are domain III; it reads PKSLAVAQASEALESLGFKKDKISKALGSCSAVDTAILVKEALKLLQTI.

Belongs to the RuvA family. In terms of assembly, homotetramer. Forms an RuvA(8)-RuvB(12)-Holliday junction (HJ) complex. HJ DNA is sandwiched between 2 RuvA tetramers; dsDNA enters through RuvA and exits via RuvB. An RuvB hexamer assembles on each DNA strand where it exits the tetramer. Each RuvB hexamer is contacted by two RuvA subunits (via domain III) on 2 adjacent RuvB subunits; this complex drives branch migration. In the full resolvosome a probable DNA-RuvA(4)-RuvB(12)-RuvC(2) complex forms which resolves the HJ.

The protein resides in the cytoplasm. Its function is as follows. The RuvA-RuvB-RuvC complex processes Holliday junction (HJ) DNA during genetic recombination and DNA repair, while the RuvA-RuvB complex plays an important role in the rescue of blocked DNA replication forks via replication fork reversal (RFR). RuvA specifically binds to HJ cruciform DNA, conferring on it an open structure. The RuvB hexamer acts as an ATP-dependent pump, pulling dsDNA into and through the RuvAB complex. HJ branch migration allows RuvC to scan DNA until it finds its consensus sequence, where it cleaves and resolves the cruciform DNA. In Sulfurimonas denitrificans (strain ATCC 33889 / DSM 1251) (Thiomicrospira denitrificans (strain ATCC 33889 / DSM 1251)), this protein is Holliday junction branch migration complex subunit RuvA.